A 579-amino-acid polypeptide reads, in one-letter code: 2-succinyl-5-enolpyruvyl-6-hydroxy-3-cyclohexene-1-carboxylate synthase (579 aa).

It belongs to the TPP enzyme family. MenD subfamily. As to quaternary structure, homodimer. The cofactor is Mg(2+). Mn(2+) serves as cofactor. It depends on thiamine diphosphate as a cofactor.

The catalysed reaction is isochorismate + 2-oxoglutarate + H(+) = 5-enolpyruvoyl-6-hydroxy-2-succinyl-cyclohex-3-ene-1-carboxylate + CO2. The protein operates within quinol/quinone metabolism; 1,4-dihydroxy-2-naphthoate biosynthesis; 1,4-dihydroxy-2-naphthoate from chorismate: step 2/7. It functions in the pathway quinol/quinone metabolism; menaquinone biosynthesis. Catalyzes the thiamine diphosphate-dependent decarboxylation of 2-oxoglutarate and the subsequent addition of the resulting succinic semialdehyde-thiamine pyrophosphate anion to isochorismate to yield 2-succinyl-5-enolpyruvyl-6-hydroxy-3-cyclohexene-1-carboxylate (SEPHCHC). This is 2-succinyl-5-enolpyruvyl-6-hydroxy-3-cyclohexene-1-carboxylate synthase from Shewanella frigidimarina (strain NCIMB 400).